A 196-amino-acid chain; its full sequence is GTP cyclohydrolase 1 (196 aa).

Cys85, His88, and Cys156 together coordinate Zn(2+).

It belongs to the GTP cyclohydrolase I family. In terms of assembly, toroid-shaped homodecamer, composed of two pentamers of five dimers.

The catalysed reaction is GTP + H2O = 7,8-dihydroneopterin 3'-triphosphate + formate + H(+). Its pathway is cofactor biosynthesis; 7,8-dihydroneopterin triphosphate biosynthesis; 7,8-dihydroneopterin triphosphate from GTP: step 1/1. This Bacteroides thetaiotaomicron (strain ATCC 29148 / DSM 2079 / JCM 5827 / CCUG 10774 / NCTC 10582 / VPI-5482 / E50) protein is GTP cyclohydrolase 1.